Here is a 414-residue protein sequence, read N- to C-terminus: tRNA(Ile)-lysidine synthase (414 aa).

Residue 13–18 (SGGIDS) participates in ATP binding.

The protein belongs to the tRNA(Ile)-lysidine synthase family.

Its subcellular location is the cytoplasm. It carries out the reaction cytidine(34) in tRNA(Ile2) + L-lysine + ATP = lysidine(34) in tRNA(Ile2) + AMP + diphosphate + H(+). Functionally, ligates lysine onto the cytidine present at position 34 of the AUA codon-specific tRNA(Ile) that contains the anticodon CAU, in an ATP-dependent manner. Cytidine is converted to lysidine, thus changing the amino acid specificity of the tRNA from methionine to isoleucine. The protein is tRNA(Ile)-lysidine synthase of Thermotoga sp. (strain RQ2).